The following is a 115-amino-acid chain: MRVGCDIIAISRIEKIHSRHGKNFLDKFLSPKEQILIKNPATLAGLWAAKEAASKALGVGICELCSFFDIEISKDERNAPKLKYSQKITKDFNITQTSLSISHDNGFAIAIVAIV.

Residues Asp6 and Glu51 each coordinate Mg(2+).

The protein belongs to the P-Pant transferase superfamily. AcpS family. Requires Mg(2+) as cofactor.

Its subcellular location is the cytoplasm. It catalyses the reaction apo-[ACP] + CoA = holo-[ACP] + adenosine 3',5'-bisphosphate + H(+). Functionally, transfers the 4'-phosphopantetheine moiety from coenzyme A to a Ser of acyl-carrier-protein. This is Holo-[acyl-carrier-protein] synthase from Campylobacter jejuni subsp. doylei (strain ATCC BAA-1458 / RM4099 / 269.97).